The following is a 570-amino-acid chain: Sulfite reductase [NADPH] hemoprotein beta-component (570 aa).

4 residues coordinate [4Fe-4S] cluster: cysteine 434, cysteine 440, cysteine 479, and cysteine 483. Cysteine 483 contacts siroheme.

The protein belongs to the nitrite and sulfite reductase 4Fe-4S domain family. As to quaternary structure, alpha(8)-beta(8). The alpha component is a flavoprotein, the beta component is a hemoprotein. The cofactor is siroheme. [4Fe-4S] cluster is required as a cofactor.

The enzyme catalyses hydrogen sulfide + 3 NADP(+) + 3 H2O = sulfite + 3 NADPH + 4 H(+). It participates in sulfur metabolism; hydrogen sulfide biosynthesis; hydrogen sulfide from sulfite (NADPH route): step 1/1. Its function is as follows. Component of the sulfite reductase complex that catalyzes the 6-electron reduction of sulfite to sulfide. This is one of several activities required for the biosynthesis of L-cysteine from sulfate. This is Sulfite reductase [NADPH] hemoprotein beta-component from Escherichia coli O6:H1 (strain CFT073 / ATCC 700928 / UPEC).